The following is a 593-amino-acid chain: Copine-5 (593 aa).

The C2 1 domain occupies 2–134; the sequence is EQPEDMASLS…SPGSRLEKPL (133 aa). Ser19 carries the phosphoserine modification. Ca(2+) contacts are provided by Asp38, Asp44, Asp98, Asp100, Ser103, Lys108, and Asp110. At Ser103 the chain carries Phosphoserine. A Phosphoserine modification is found at Ser140. The 124-residue stretch at 161-284 folds into the C2 2 domain; the sequence is KCGTIILSAE…ARGQSQFNIY (124 aa). Ca(2+) contacts are provided by Asp192, Asp198, Asp254, Asp256, and Asp262. Residues 328 to 554 form the VWFA domain; that stretch reads NFTVAIDFTA…DVLAEIPDQL (227 aa). Positions 562 to 593 are disordered; the sequence is GIRPRPPPAAPTHSPSQSPARTPPASPLHTHI. Low complexity predominate over residues 572–581; it reads PTHSPSQSPA.

The protein belongs to the copine family. It depends on Ca(2+) as a cofactor. As to expression, expressed in the brain, heart, stomach, spleen, lymph node and testis. Expressed in melanocytes.

The protein localises to the perikaryon. It localises to the cell projection. Functionally, probable calcium-dependent phospholipid-binding protein that may play a role in calcium-mediated intracellular processes. Plays a role in dendrite formation by melanocytes. In Homo sapiens (Human), this protein is Copine-5.